We begin with the raw amino-acid sequence, 65 residues long: Large ribosomal subunit protein bL35 (65 aa).

Residues Asn-28 to Ala-53 are disordered. Residues Lys-36 to His-45 show a composition bias toward basic residues.

This sequence belongs to the bacterial ribosomal protein bL35 family.

In Chlorobium luteolum (strain DSM 273 / BCRC 81028 / 2530) (Pelodictyon luteolum), this protein is Large ribosomal subunit protein bL35.